We begin with the raw amino-acid sequence, 32 residues long: Zinc metalloproteinase carinactivase-1 catalytic subunit (32 aa).

The 23-residue stretch at 10 to 32 (FIKLVIVVDHSMVXKXNNDLIAI) folds into the Peptidase M12B domain.

The protein belongs to the venom metalloproteinase (M12B) family. P-III subfamily. P-IIId sub-subfamily. In terms of assembly, heterodimer of a metalloproteinase subunit and a regulatory subunit comprising two disulfide-linked lectins (14 kDa and 17 kDa chains) (AC Q9PRP7 and AC Q9PRP8). Zn(2+) serves as cofactor. In terms of tissue distribution, expressed by the venom gland.

It localises to the secreted. Its function is as follows. Calcium-dependent prothrombin (F2) activator. This protein may activate prothrombin via recognition by the regulatory subunit of the calcium ion bound conformation of its gamma-carboxyglutamic acid (GLA) domain, and the subsequent conversion of prothrombin to active thrombin is catalyzed by the catalytic subunit. This chain is Zinc metalloproteinase carinactivase-1 catalytic subunit, found in Echis carinatus (Saw-scaled viper).